Here is a 445-residue protein sequence, read N- to C-terminus: Inward rectifier potassium channel 4 (445 aa).

The Cytoplasmic portion of the chain corresponds to 1-55 (MHGHSRNGQAHVPRRKRRNRFVKKNGQCNVYFANLSNKSQRYMADIFTTCVDTRW). Residues 56–80 (RYMLMIFSAAFLVSWLFFGLLFWCI) traverse the membrane as a helical segment. At 81 to 120 (AFFHGDLEASPGVPAAGGPAAGGGGAAPVAPKPCIMHVNG) the chain is on the extracellular side. The val/Gly/Ala/Pro stretch stretch occupies residues 91 to 111 (PGVPAAGGPAAGGGGAAPVAP). Residues 121-132 (FLGAFLFSVETQ) constitute an intramembrane region (helical; Pore-forming). The segment at residues 133–139 (TTIGYGF) is an intramembrane region (pore-forming). Residues 134-139 (TIGYGF) carry the Selectivity filter motif. Over 140 to 148 (RCVTEECPL) the chain is Extracellular. Residues 149–170 (AVIAVVVQSIVGCVIDSFMIGT) form a helical membrane-spanning segment. Topologically, residues 171-445 (IMAKMARPKK…NISYRRESAI (275 aa)) are cytoplasmic. Positions 443–445 (SAI) match the PDZ-binding motif.

It belongs to the inward rectifier-type potassium channel (TC 1.A.2.1) family. KCNJ4 subfamily. Homomultimeric and heteromultimeric association with KCNJ2 and KCNJ12. Interacts with DLG2 and DLG4. Associates, via its PDZ-recognition domain, with a complex containing LIN7A, LIN7B, LIN7C, DLG1, CASK and APBA1. Interacts with TAX1BP3. TAX1BP3 competes with LIN7 family members for KCNJ4 binding. As to expression, heart, skeletal muscle, and several different brain regions including the hippocampus.

It is found in the cell membrane. It localises to the postsynaptic cell membrane. The protein resides in the cytoplasmic vesicle membrane. It carries out the reaction K(+)(in) = K(+)(out). In terms of biological role, inward rectifier potassium channels are characterized by a greater tendency to allow potassium to flow into the cell rather than out of it. Their voltage dependence is regulated by the concentration of extracellular potassium; as external potassium is raised, the voltage range of the channel opening shifts to more positive voltages. The inward rectification is mainly due to the blockage of outward current by internal magnesium. Can be blocked by extracellular barium and cesium. The sequence is that of Inward rectifier potassium channel 4 (KCNJ4) from Homo sapiens (Human).